Reading from the N-terminus, the 305-residue chain is Glyceraldehyde-3-phosphate dehydrogenase 2, cytosolic (305 aa).

NAD(+) contacts are provided by D3 and R50. Residues 121-123 (SCT), T152, 181-182 (TG), and R204 contribute to the D-glyceraldehyde 3-phosphate site. C122 functions as the Nucleophile in the catalytic mechanism. Residue N286 participates in NAD(+) binding.

The protein belongs to the glyceraldehyde-3-phosphate dehydrogenase family. As to quaternary structure, homotetramer.

The protein resides in the cytoplasm. The enzyme catalyses D-glyceraldehyde 3-phosphate + phosphate + NAD(+) = (2R)-3-phospho-glyceroyl phosphate + NADH + H(+). The protein operates within carbohydrate degradation; glycolysis; pyruvate from D-glyceraldehyde 3-phosphate: step 1/5. Key enzyme in glycolysis that catalyzes the first step of the pathway by converting D-glyceraldehyde 3-phosphate (G3P) into 3-phospho-D-glyceroyl phosphate. Essential for the maintenance of cellular ATP levels and carbohydrate metabolism. This Hordeum vulgare (Barley) protein is Glyceraldehyde-3-phosphate dehydrogenase 2, cytosolic (GAPC).